The chain runs to 335 residues: Phosphate acyltransferase (335 aa).

It belongs to the PlsX family. Homodimer. Probably interacts with PlsY.

The protein localises to the cytoplasm. The catalysed reaction is a fatty acyl-[ACP] + phosphate = an acyl phosphate + holo-[ACP]. It participates in lipid metabolism; phospholipid metabolism. In terms of biological role, catalyzes the reversible formation of acyl-phosphate (acyl-PO(4)) from acyl-[acyl-carrier-protein] (acyl-ACP). This enzyme utilizes acyl-ACP as fatty acyl donor, but not acyl-CoA. The sequence is that of Phosphate acyltransferase from Clostridium botulinum (strain ATCC 19397 / Type A).